The sequence spans 305 residues: Peroxisome biogenesis factor 2 (305 aa).

Topologically, residues 1-15 (MAAREESTQSANRVL) are peroxisomal matrix. A helical membrane pass occupies residues 16–42 (RISQLDALELNKALEQLVWSQFTQCFH). At 43–48 (GFKPGL) the chain is on the cytoplasmic side. A helical transmembrane segment spans residues 49–74 (LARFEPEVKAFLWLFLWRFTIYSKNA). The Peroxisomal matrix portion of the chain corresponds to 75–98 (TVGQSVLNIQYKNDSSPNPVYQPP). A helical transmembrane segment spans residues 99–125 (SKNQKLLYAVCTIGGRWLEERCYDLFR). Topologically, residues 126–133 (NRHLASFG) are cytoplasmic. Residues 134–160 (KAKQCMNFVVGLLKLGELMNFLIFLQK) traverse the membrane as a helical segment. At 161–187 (GKFATLTERLLGIHSVFCKPQSMREVG) the chain is on the peroxisomal matrix side. The helical transmembrane segment at 188 to 211 (FEYMNRELLWHGFAEFLVFLLPLI) threads the bilayer. Topologically, residues 212-305 (NIQKLKAKLS…GIEMSEVNAL (94 aa)) are cytoplasmic. Residues Cys244, Cys247, Cys259, His261, Cys264, Cys267, Cys280, and Cys283 each contribute to the Zn(2+) site. The RING-type zinc-finger motif lies at 244 to 284 (CALCGEWPTMPHTIGCEHVFCYYCVKSSFLFDMYFTCPKCG).

The protein belongs to the pex2/pex10/pex12 family. Component of the PEX2-PEX10-PEX12 retrotranslocation channel, composed of PEX2, PEX10 and PEX12. Post-translationally, forms intramolecular and intermolecular disulfide bonds in response to reactive oxygen species (ROS), promoting higher stability.

The protein localises to the peroxisome membrane. It carries out the reaction [E2 ubiquitin-conjugating enzyme]-S-ubiquitinyl-L-cysteine + [acceptor protein]-L-cysteine = [E2 ubiquitin-conjugating enzyme]-L-cysteine + [acceptor protein]-S-ubiquitinyl-L-cysteine.. The catalysed reaction is S-ubiquitinyl-[E2 ubiquitin-conjugating enzyme]-L-cysteine + [acceptor protein]-L-lysine = [E2 ubiquitin-conjugating enzyme]-L-cysteine + N(6)-ubiquitinyl-[acceptor protein]-L-lysine.. The protein operates within protein modification; protein ubiquitination. In terms of biological role, E3 ubiquitin-protein ligase component of a retrotranslocation channel required for peroxisome organization by mediating export of the PEX5 receptor from peroxisomes to the cytosol, thereby promoting PEX5 recycling. The retrotranslocation channel is composed of PEX2, PEX10 and PEX12; each subunit contributing transmembrane segments that coassemble into an open channel that specifically allows the passage of PEX5 through the peroxisomal membrane. PEX2 also regulates peroxisome organization by acting as a E3 ubiquitin-protein ligase. PEX2 ubiquitinates PEX5 during its passage through the retrotranslocation channel: catalyzes monoubiquitination of PEX5 at 'Cys-11', a modification that acts as a signal for PEX5 extraction into the cytosol. Required for pexophagy in response to starvation by mediating ubiquitination of peroxisomal proteins, such as PEX5 and ABCD3/PMP70. Also involved in the response to reactive oxygen species (ROS) by mediating 'Lys-48'-linked polyubiquitination and subsequent degradation of PNPLA2/ATGL, thereby regulating lipolysis. The sequence is that of Peroxisome biogenesis factor 2 (Pex2) from Rattus norvegicus (Rat).